Here is a 385-residue protein sequence, read N- to C-terminus: Deoxyguanosinetriphosphate triphosphohydrolase-like protein (385 aa).

Positions 62-197 (RLTHSLEVAQ…VSLADDIAYS (136 aa)) constitute an HD domain.

It belongs to the dGTPase family. Type 2 subfamily.

The chain is Deoxyguanosinetriphosphate triphosphohydrolase-like protein from Neorickettsia sennetsu (strain ATCC VR-367 / Miyayama) (Ehrlichia sennetsu).